Consider the following 282-residue polypeptide: BTB/POZ domain-containing protein At3g56230 (282 aa).

Residues 40–50 (GSKEDRHDKSN) show a composition bias toward basic and acidic residues. Residues 40-66 (GSKEDRHDKSNHNSTINNGSSISSSPL) form a disordered region. Over residues 51-64 (HNSTINNGSSISSS) the composition is skewed to low complexity. In terms of domain architecture, BTB spans 111–181 (ADILLKPGDD…LYTGTLASDK (71 aa)).

It participates in protein modification; protein ubiquitination. In terms of biological role, may act as a substrate-specific adapter of an E3 ubiquitin-protein ligase complex (CUL3-RBX1-BTB) which mediates the ubiquitination and subsequent proteasomal degradation of target proteins. This Arabidopsis thaliana (Mouse-ear cress) protein is BTB/POZ domain-containing protein At3g56230.